A 224-amino-acid chain; its full sequence is COMM domain-containing protein 5 (224 aa).

An N-acetylserine modification is found at S2. The 65-residue stretch at 151 to 215 (HVADFRWRVD…LVLKEMADLE (65 aa)) folds into the COMM domain.

Belongs to the COMM domain-containing protein 5 family. In terms of assembly, component of the commander complex consisting of the CCC subcomplex and the retriever subcomplex. Component of the CCC (COMMD/CCDC22/CCDC93) subcomplex consisting of COMMD1, COMMD2, COMMD3, COMMD4, COMMD5, COMMD6, COMMD7, COMMD8, COMMD9, COMMD10, CCDC22 and CCDC93; within the complex forms a heterodimer with COMMD10. Interacts (via COMM domain) with COMMD1 (via COMM domain). Interacts with RELA, RELB, NFKB1/p105. Interacts with CCDC22, CCDC93, SCNN1B, CUL2, CUL3, CUL4A, CUL4B, CUL7. Highly expressed in heart, stomach, jejunum, kidney, liver, and adrenal gland. Expression was generally higher in adult organs than in fetal tissues, particularly in heart, kidney, and liver.

Its subcellular location is the cytoplasm. It localises to the nucleus. In terms of biological role, scaffold protein in the commander complex that is essential for endosomal recycling of transmembrane cargos; the commander complex is composed of the CCC subcomplex and the retriever subcomplex. May modulate activity of cullin-RING E3 ubiquitin ligase (CRL) complexes. Negatively regulates cell proliferation. Negatively regulates cell cycle G2/M phase transition probably by transactivating p21/CDKN1A through the p53/TP53-independent signaling pathway. Involved in kidney proximal tubule morphogenesis. Down-regulates activation of NF-kappa-B. The protein is COMM domain-containing protein 5 (COMMD5) of Homo sapiens (Human).